The primary structure comprises 134 residues: Profilin-3 (134 aa).

Cys13 and Cys118 form a disulfide bridge. Residues 84 to 100 carry the Involved in PIP2 interaction motif; sequence AVIRGKKGSGGITIKKT. A Phosphothreonine modification is found at Thr114.

This sequence belongs to the profilin family. As to quaternary structure, occurs in many kinds of cells as a complex with monomeric actin in a 1:1 ratio. Phosphorylated by MAP kinases.

The protein resides in the cytoplasm. The protein localises to the cytoskeleton. Functionally, binds to actin and affects the structure of the cytoskeleton. At high concentrations, profilin prevents the polymerization of actin, whereas it enhances it at low concentrations. This chain is Profilin-3, found in Olea europaea (Common olive).